The following is a 415-amino-acid chain: Serine hydroxymethyltransferase 2 (415 aa).

(6S)-5,6,7,8-tetrahydrofolate is bound by residues Leu-121 and 125-127 (GHL). Lys-229 carries the post-translational modification N6-(pyridoxal phosphate)lysine.

The protein belongs to the SHMT family. In terms of assembly, homodimer. Requires pyridoxal 5'-phosphate as cofactor.

Its subcellular location is the cytoplasm. It catalyses the reaction (6R)-5,10-methylene-5,6,7,8-tetrahydrofolate + glycine + H2O = (6S)-5,6,7,8-tetrahydrofolate + L-serine. Its pathway is one-carbon metabolism; tetrahydrofolate interconversion. It participates in amino-acid biosynthesis; glycine biosynthesis; glycine from L-serine: step 1/1. Catalyzes the reversible interconversion of serine and glycine with tetrahydrofolate (THF) serving as the one-carbon carrier. This reaction serves as the major source of one-carbon groups required for the biosynthesis of purines, thymidylate, methionine, and other important biomolecules. Also exhibits THF-independent aldolase activity toward beta-hydroxyamino acids, producing glycine and aldehydes, via a retro-aldol mechanism. This Bordetella parapertussis (strain 12822 / ATCC BAA-587 / NCTC 13253) protein is Serine hydroxymethyltransferase 2.